Consider the following 347-residue polypeptide: Isopentenyl-diphosphate delta-isomerase (347 aa).

A substrate-binding site is contributed by Arg-9–Lys-10. Residues Ser-67, Ser-68–Thr-70, Ser-98, and Asn-127 each bind FMN. Ser-98–Arg-100 contacts substrate. Gln-162 lines the substrate pocket. Position 163 (Glu-163) interacts with Mg(2+). FMN-binding positions include Lys-194, Thr-224, Gly-274–Lys-276, and Ala-295–Ala-296.

Belongs to the IPP isomerase type 2 family. As to quaternary structure, homooctamer. Dimer of tetramers. FMN is required as a cofactor. NADPH serves as cofactor. It depends on Mg(2+) as a cofactor.

The protein localises to the cytoplasm. The catalysed reaction is isopentenyl diphosphate = dimethylallyl diphosphate. Its function is as follows. Involved in the biosynthesis of isoprenoids. Catalyzes the 1,3-allylic rearrangement of the homoallylic substrate isopentenyl (IPP) to its allylic isomer, dimethylallyl diphosphate (DMAPP). The protein is Isopentenyl-diphosphate delta-isomerase of Pseudescherichia vulneris (Escherichia vulneris).